A 122-amino-acid chain; its full sequence is Large ribosomal subunit protein uL18 (122 aa).

This sequence belongs to the universal ribosomal protein uL18 family. Part of the 50S ribosomal subunit; part of the 5S rRNA/L5/L18/L25 subcomplex. Contacts the 5S and 23S rRNAs.

In terms of biological role, this is one of the proteins that bind and probably mediate the attachment of the 5S RNA into the large ribosomal subunit, where it forms part of the central protuberance. This is Large ribosomal subunit protein uL18 from Fervidobacterium nodosum (strain ATCC 35602 / DSM 5306 / Rt17-B1).